Here is a 469-residue protein sequence, read N- to C-terminus: 3-isopropylmalate dehydratase large subunit (469 aa).

The [4Fe-4S] cluster site is built by Cys347, Cys407, and Cys410.

The protein belongs to the aconitase/IPM isomerase family. LeuC type 1 subfamily. Heterodimer of LeuC and LeuD. [4Fe-4S] cluster serves as cofactor.

It catalyses the reaction (2R,3S)-3-isopropylmalate = (2S)-2-isopropylmalate. Its pathway is amino-acid biosynthesis; L-leucine biosynthesis; L-leucine from 3-methyl-2-oxobutanoate: step 2/4. Functionally, catalyzes the isomerization between 2-isopropylmalate and 3-isopropylmalate, via the formation of 2-isopropylmaleate. This is 3-isopropylmalate dehydratase large subunit from Prochlorococcus marinus (strain NATL1A).